The primary structure comprises 990 residues: Serine/threonine-protein kinase ATG1 (990 aa).

Residues 15 to 334 (FVIENEIGKG…FDDFFASPVI (320 aa)) enclose the Protein kinase domain. ATP-binding positions include 21–29 (IGKGSFAVV) and lysine 44. Aspartate 165 (proton acceptor) is an active-site residue. Positions 375-408 (VSSIEASTQQPGVQPPVSTATSPPALESRSTQEA) are enriched in polar residues. Disordered regions lie at residues 375-499 (VSSI…GGED), 529-566 (SRLGLASRRPSRLSRLSSGPLPSAPGASPPTAPPTILS), 579-614 (ASTGAFALPPGSRPSSFPRRASLSSSGSPSTRQGGQ), 750-784 (LSQELDSSTATSGISPSRNSVQGSARRVGSISSSS), and 970-990 (SPVGVDAEARPGVSRSRTESP). Composition is skewed to low complexity over residues 529-554 (SRLGLASRRPSRLSRLSSGPLPSAPG) and 587-613 (PPGSRPSSFPRRASLSSSGSPSTRQGG). Polar residues predominate over residues 750-771 (LSQELDSSTATSGISPSRNSVQ). Low complexity predominate over residues 772 to 784 (GSARRVGSISSSS).

It belongs to the protein kinase superfamily. Ser/Thr protein kinase family. APG1/unc-51/ULK1 subfamily. In terms of assembly, homodimer. Forms a ternary complex with ATG13 and ATG17.

The protein localises to the cytoplasm. The protein resides in the preautophagosomal structure membrane. It carries out the reaction L-seryl-[protein] + ATP = O-phospho-L-seryl-[protein] + ADP + H(+). It catalyses the reaction L-threonyl-[protein] + ATP = O-phospho-L-threonyl-[protein] + ADP + H(+). Its function is as follows. Serine/threonine protein kinase involved in the cytoplasm to vacuole transport (Cvt) and found to be essential in autophagy, where it is required for the formation of autophagosomes. Involved in the clearance of protein aggregates which cannot be efficiently cleared by the proteasome. Required for selective autophagic degradation of the nucleus (nucleophagy) as well as for mitophagy which contributes to regulate mitochondrial quantity and quality by eliminating the mitochondria to a basal level to fulfill cellular energy requirements and preventing excess ROS production. Also involved in endoplasmic reticulum-specific autophagic process, in selective removal of ER-associated degradation (ERAD) substrates. Plays a key role in ATG9 and ATG23 cycling through the pre-autophagosomal structure and is necessary to promote ATG18 binding to ATG9 through phosphorylation of ATG9. Catalyzes phosphorylation of ATG4, decreasing the interaction between ATG4 and ATG8 and impairing deconjugation of PE-conjugated forms of ATG8. Required for wild-type budding of haploid sporidia and for complete symptom development during pathogenic growth such as gall formation and teliospore production in ears of mature maize. The protein is Serine/threonine-protein kinase ATG1 of Mycosarcoma maydis (Corn smut fungus).